The following is a 105-amino-acid chain: Probable tetrachloroethene reductive dehalogenase membrane anchor protein (105 aa).

Transmembrane regions (helical) follow at residues isoleucine 3–isoleucine 23, isoleucine 35–glycine 55, and alanine 66–tyrosine 86.

It belongs to the PceB family.

Its subcellular location is the cell membrane. In terms of biological role, may act as a membrane anchor for the tetrachloroethene reductive dehalogenase PceA. The chain is Probable tetrachloroethene reductive dehalogenase membrane anchor protein from Desulfitobacterium hafniense (Desulfitobacterium frappieri).